A 114-amino-acid polypeptide reads, in one-letter code: Large ribosomal subunit protein bL19 (114 aa).

It belongs to the bacterial ribosomal protein bL19 family.

Functionally, this protein is located at the 30S-50S ribosomal subunit interface and may play a role in the structure and function of the aminoacyl-tRNA binding site. In Listeria welshimeri serovar 6b (strain ATCC 35897 / DSM 20650 / CCUG 15529 / CIP 8149 / NCTC 11857 / SLCC 5334 / V8), this protein is Large ribosomal subunit protein bL19.